The primary structure comprises 124 residues: Small ribosomal subunit protein uS12c (124 aa).

Residues 104–124 (SGGVKDRTQRRSKYGVKKPKS) are disordered. Positions 113 to 124 (RRSKYGVKKPKS) are enriched in basic residues.

This sequence belongs to the universal ribosomal protein uS12 family. Part of the 30S ribosomal subunit.

It localises to the plastid. Its subcellular location is the chloroplast. Its function is as follows. With S4 and S5 plays an important role in translational accuracy. Located at the interface of the 30S and 50S subunits. This Thalassiosira pseudonana (Marine diatom) protein is Small ribosomal subunit protein uS12c (rps12).